Here is a 264-residue protein sequence, read N- to C-terminus: Thymidylate synthase (264 aa).

R21 contacts dUMP. A (6R)-5,10-methylene-5,6,7,8-tetrahydrofolate-binding site is contributed by H51. 126-127 (RR) contributes to the dUMP binding site. Residue C146 is the Nucleophile of the active site. DUMP-binding positions include 166-169 (RSAD), N177, and 207-209 (HIY). Position 169 (D169) interacts with (6R)-5,10-methylene-5,6,7,8-tetrahydrofolate. S263 is a binding site for (6R)-5,10-methylene-5,6,7,8-tetrahydrofolate.

Belongs to the thymidylate synthase family. Bacterial-type ThyA subfamily. As to quaternary structure, homodimer.

It is found in the cytoplasm. It carries out the reaction dUMP + (6R)-5,10-methylene-5,6,7,8-tetrahydrofolate = 7,8-dihydrofolate + dTMP. It participates in pyrimidine metabolism; dTTP biosynthesis. Catalyzes the reductive methylation of 2'-deoxyuridine-5'-monophosphate (dUMP) to 2'-deoxythymidine-5'-monophosphate (dTMP) while utilizing 5,10-methylenetetrahydrofolate (mTHF) as the methyl donor and reductant in the reaction, yielding dihydrofolate (DHF) as a by-product. This enzymatic reaction provides an intracellular de novo source of dTMP, an essential precursor for DNA biosynthesis. This chain is Thymidylate synthase, found in Bacillus pumilus (strain SAFR-032).